A 402-amino-acid chain; its full sequence is Deacetylase Oant_2987 (402 aa).

Zn(2+) contacts are provided by H70, H72, K168, H201, H224, and D284. K168 bears the N6-carboxylysine mark.

This sequence belongs to the metallo-dependent hydrolases superfamily. Atu3266/EF_0837 deacetylase family. It depends on Zn(2+) as a cofactor.

Esterase that catalyzes the deacetylation of acetyl-(R)-mandelate (in vitro). Can also hydrolyze acetyl glycolate, but with lower efficiency. Has very low N-acetyl-D-amino acid deacetylase activity with N-acetyl-D-serine and N-acetyl-D-threonine (in vitro). Theoretical substrate docking studies suggest that other N-acetylated amino acids may optimally occupy the active site and may in fact be the physiological substrates. This chain is Deacetylase Oant_2987, found in Brucella anthropi (strain ATCC 49188 / DSM 6882 / CCUG 24695 / JCM 21032 / LMG 3331 / NBRC 15819 / NCTC 12168 / Alc 37) (Ochrobactrum anthropi).